The chain runs to 304 residues: Homoserine O-acetyltransferase (304 aa).

Residue Cys-142 is the Acyl-thioester intermediate of the active site. Substrate is bound by residues Lys-163 and Ser-191. Residue His-234 is the Proton acceptor of the active site. The active site involves Glu-236. Position 248 (Arg-248) interacts with substrate.

This sequence belongs to the MetA family.

The protein resides in the cytoplasm. It carries out the reaction L-homoserine + acetyl-CoA = O-acetyl-L-homoserine + CoA. It functions in the pathway amino-acid biosynthesis; L-methionine biosynthesis via de novo pathway; O-acetyl-L-homoserine from L-homoserine: step 1/1. In terms of biological role, transfers an acetyl group from acetyl-CoA to L-homoserine, forming acetyl-L-homoserine. The protein is Homoserine O-acetyltransferase of Thermotoga petrophila (strain ATCC BAA-488 / DSM 13995 / JCM 10881 / RKU-1).